The chain runs to 92 residues: LYR motif-containing protein 4 homolog (92 aa).

Residues 40-68 (ANKAIRDFAEIDRQMEAGKQNLELIRRQV) adopt a coiled-coil conformation.

The protein belongs to the complex I LYR family. As to quaternary structure, component of the mitochondrial core iron-sulfur cluster (ISC) assembly complex at least composed of the cysteine desulfurase Nfs1, the scaffold protein IscU, the accessory protein bcn92/Isd11/Lyrm4, and probably fh/frataxin. Interacts with Nfs1.

The protein localises to the mitochondrion. Functionally, stabilizing factor of the core iron-sulfur cluster (ISC) assembly complex that regulates the stability and cysteine desulfurase activity of Nfs1 and participates in the [2Fe-2S] clusters assembly on the scaffolding protein IscU. The chain is LYR motif-containing protein 4 homolog from Drosophila subobscura (Fruit fly).